Reading from the N-terminus, the 157-residue chain is Regulatory protein RecX (157 aa).

The protein belongs to the RecX family.

It is found in the cytoplasm. Modulates RecA activity. The polypeptide is Regulatory protein RecX (Leptothrix cholodnii (strain ATCC 51168 / LMG 8142 / SP-6) (Leptothrix discophora (strain SP-6))).